A 192-amino-acid chain; its full sequence is Fe/S biogenesis protein NfuA (192 aa).

Residues cysteine 150 and cysteine 153 each contribute to the [4Fe-4S] cluster site.

Belongs to the NfuA family. As to quaternary structure, homodimer. [4Fe-4S] cluster serves as cofactor.

Functionally, involved in iron-sulfur cluster biogenesis. Binds a 4Fe-4S cluster, can transfer this cluster to apoproteins, and thereby intervenes in the maturation of Fe/S proteins. Could also act as a scaffold/chaperone for damaged Fe/S proteins. The chain is Fe/S biogenesis protein NfuA from Vesicomyosocius okutanii subsp. Calyptogena okutanii (strain HA).